Here is a 438-residue protein sequence, read N- to C-terminus: MYRTHYSSEITEELNGQKVKVAGWVWEVKDLGGIKFLWIRDRDGIVQITAPKKKVDPELFKLIPKLRSEDVVAVEGVVNFTPKAKLGFEILPEKIVVLNRAETPLPLDPTGKVKAELDTRLDNRFMDLRRPEVMAIFKIRSSVFKAVRDFFHENGFIEIHTPKIIATATEGGTELFPMKYFEEDAFLAQSPQLYKQIMMASGLDRVYEIAPIFRAEEHNTTRHLNEAWSIDSEMAFIEDEEEVMSFLERLVAHAINYVREHNAKELDILNFELEEPKLPFPRVSYDKALEILGDLGKEIPWGEDIDTEGERLLGKYMMENENAPLYFLYQYPSEAKPFYIMKYDNKPEICRAFDLEYRGVEISSGGQREHRHDILVEQIKEKGLNPESFEFYLKAFRYGMPPHGGFGLGAERLIKQMLDLPNIREVILFPRDRRRLTP.

Residue Glu170 participates in L-aspartate binding. Positions 192-195 (QLYK) are aspartate. Arg214 contacts L-aspartate. ATP-binding positions include 214-216 (RAE), 222-224 (RHL), and Glu361. 2 residues coordinate Mg(2+): Glu361 and Ser364. The L-aspartate site is built by Ser364 and Arg368. Residue 409–412 (GAER) coordinates ATP.

Belongs to the class-II aminoacyl-tRNA synthetase family. Type 2 subfamily. Homodimer. Mg(2+) serves as cofactor.

It localises to the cytoplasm. It catalyses the reaction tRNA(Asp) + L-aspartate + ATP = L-aspartyl-tRNA(Asp) + AMP + diphosphate. Catalyzes the attachment of L-aspartate to tRNA(Asp) in a two-step reaction: L-aspartate is first activated by ATP to form Asp-AMP and then transferred to the acceptor end of tRNA(Asp). Is specific for tRNA(Asp) since it aspartylates tRNA(Asn) 3 orders of magnitude less efficiently than tRNA(Asp). This is Aspartate--tRNA(Asp) ligase from Thermococcus kodakarensis (strain ATCC BAA-918 / JCM 12380 / KOD1) (Pyrococcus kodakaraensis (strain KOD1)).